The primary structure comprises 291 residues: MAGVKLLLLSLCVGYTAYHFYSSESMNPESVRGKRVLITGSSTGIGEQIAYEFARMGAHIMVTARRLQRLQEVANECLKLGAASAHYVASDMGNLTSAQYVAQEAVNKLGGLDYLVLNHIGGSASFGFFKGEMDPVVGSIYINFLSYVQLTSAALKALQESQGSIVVMSSMSGRIGAPFTTSYCASKFALEGFYSSLRREFALQNSNMSVTVAVLGYIDTENAVKKVGNKVSMSASSKEDCAREVVKAAVLKQPELFYPYWGIKPFVLLRDWFPGLVAKILDNFYILENIQ.

An N-terminal signal peptide occupies residues 1–18 (MAGVKLLLLSLCVGYTAY). NADP(+) contacts are provided by residues 40 to 66 (GSSTGIGEQIAYEFARMGAHIMVTARR), 91 to 92 (DM), and 118 to 120 (NHI). Serine 170 contacts substrate. Tyrosine 183 functions as the Proton acceptor in the catalytic mechanism. Residues 183–187 (YCASK) and 216–222 (GYIDTEN) each bind NADP(+).

The protein belongs to the short-chain dehydrogenases/reductases (SDR) family.

It is found in the secreted. It carries out the reaction cortisone + NADPH + H(+) = cortisol + NADP(+). Its function is as follows. Unidirectional NADP(+)-dependent cortisol dehydrogenase (in vitro). This Xenopus laevis (African clawed frog) protein is Hydroxysteroid 11-beta-dehydrogenase 1-like protein A (hsd11b1l-a).